A 968-amino-acid polypeptide reads, in one-letter code: Isoleucine--tRNA ligase (968 aa).

The 'HIGH' region motif lies at 68–78; that stretch reads PYANGALHMGH. E582 lines the L-isoleucyl-5'-AMP pocket. Residues 623–627 carry the 'KMSKS' region motif; sequence KMSKS. Residue K626 participates in ATP binding. Positions 936, 939, 956, and 959 each coordinate Zn(2+).

The protein belongs to the class-I aminoacyl-tRNA synthetase family. IleS type 1 subfamily. Monomer. The cofactor is Zn(2+).

The protein localises to the cytoplasm. It catalyses the reaction tRNA(Ile) + L-isoleucine + ATP = L-isoleucyl-tRNA(Ile) + AMP + diphosphate. Catalyzes the attachment of isoleucine to tRNA(Ile). As IleRS can inadvertently accommodate and process structurally similar amino acids such as valine, to avoid such errors it has two additional distinct tRNA(Ile)-dependent editing activities. One activity is designated as 'pretransfer' editing and involves the hydrolysis of activated Val-AMP. The other activity is designated 'posttransfer' editing and involves deacylation of mischarged Val-tRNA(Ile). This Prochlorococcus marinus (strain MIT 9312) protein is Isoleucine--tRNA ligase.